The following is a 513-amino-acid chain: Tyrosine-protein phosphatase non-receptor type substrate 1 (513 aa).

The signal sequence occupies residues 1 to 31 (MEPAGPAPGRLGPLLLCLLLSASCFCTGATG). The 106-residue stretch at 32 to 137 (KELKVTQPEK…SSEPDTEIQS (106 aa)) folds into the Ig-like V-type domain. The Extracellular segment spans residues 32 to 373 (KELKVTQPEK…PDNNATHNWN (342 aa)). Residues asparagine 54, asparagine 92, asparagine 168, asparagine 180, asparagine 205, asparagine 209, asparagine 246, asparagine 271, asparagine 293, asparagine 302, asparagine 312, asparagine 320, asparagine 345, and asparagine 367 are each glycosylated (N-linked (GlcNAc...) asparagine). Cysteine 55 and cysteine 121 form a disulfide bridge. Ig-like C1-type domains follow at residues 149–248 (PSPP…ANLS) and 255–343 (PTVK…PAIT). Cysteine 171 and cysteine 229 form a disulfide bridge. Cysteines 274 and 332 form a disulfide. A helical transmembrane segment spans residues 374-394 (VFIGVGVACALLVVLLMAALY). At 395 to 511 (LLRIKQKKAK…FSEYASVQVQ (117 aa)) the chain is on the cytoplasmic side. Position 440 is a phosphotyrosine; by Tyr-kinases (tyrosine 440). An SH2-binding motif is present at residues 440–443 (YADL). The interval 444 to 513 (NLPKEKKPAP…EYASVQVQRK (70 aa)) is disordered. The SH3-binding signature appears at 450 to 455 (KPAPRA). Phosphotyrosine; by Tyr-kinases occurs at positions 464, 481, and 505. 3 consecutive short sequence motifs (SH2-binding) follow at residues 464-467 (YASI), 481-484 (YADL), and 505-508 (YASV). Positions 504-513 (EYASVQVQRK) are enriched in polar residues.

In terms of assembly, binds PTPN11 when tyrosine-phosphorylated, except in macrophages, where it primarily binds PTPN6. Binds GRB2 vitro. Binds FGR. Binds JAK2 irrespective of its phosphorylation status and forms a stable complex. Binds SCAP1 and/or SCAP2. The resulting complex recruits FYB1. Binds PTK2B. Interacts with TRIM2. N-glycosylated. Post-translationally, phosphorylated on tyrosine residues. Highly expressed in cerebral cortex, brain, spinal cord, cerebellum and spleen, and at much lower levels in kidney, thymus, heart, lung and liver. Within the cerebellum, highly expressed throughout the molecular layer, and in synaptic glomeruli in the granule cell layer. Detected in neurons of the hippocampus and dentate gyrus, and in olfactory bulb. Not detected in Purkinje cells. Highly expressed in the plexiform layers, optic fiber layer and the outer segments of the photoreceptor layer in the retina. Highly expressed in macrophages. Isoform 3 is detected at very low levels in all tissues tested.

The protein resides in the membrane. Functionally, immunoglobulin-like cell surface receptor for CD47. Acts as a docking protein and induces translocation of PTPN6, PTPN11 and other binding partners from the cytosol to the plasma membrane. Supports adhesion of cerebellar neurons, neurite outgrowth and glial cell attachment. May play a key role in intracellular signaling during synaptogenesis and in synaptic function. Involved in the negative regulation of receptor tyrosine kinase-coupled cellular responses induced by cell adhesion, growth factors or insulin. Mediates negative regulation of phagocytosis, mast cell activation and dendritic cell activation. CD47 binding prevents maturation of immature dendritic cells and inhibits cytokine production by mature dendritic cells. Plays a role in antiviral immunity and limits new world arenavirus infection by decreasing virus internalization. Receptor for THBS1. Interaction with THBS1 stimulates phosphorylation of SIRPA. In response to THBS1, involved in ROS signaling in non-phagocytic cells, stimulating NADPH oxidase-derived ROS production. This chain is Tyrosine-protein phosphatase non-receptor type substrate 1 (Sirpa), found in Mus musculus (Mouse).